The following is a 73-amino-acid chain: Tetrahydromethanopterin S-methyltransferase subunit F (73 aa).

Residues 52-72 (IGFAAGFLFSLLMVIVLPLLF) traverse the membrane as a helical segment.

Belongs to the MtrF family. The complex is composed of 8 subunits; MtrA, MtrB, MtrC, MtrD, MtrE, MtrF, MtrG and MtrH.

It localises to the cell membrane. It carries out the reaction 5-methyl-5,6,7,8-tetrahydromethanopterin + coenzyme M + 2 Na(+)(in) = 5,6,7,8-tetrahydromethanopterin + methyl-coenzyme M + 2 Na(+)(out). It functions in the pathway one-carbon metabolism; methanogenesis from CO(2); methyl-coenzyme M from 5,10-methylene-5,6,7,8-tetrahydromethanopterin: step 2/2. Functionally, part of a complex that catalyzes the formation of methyl-coenzyme M and tetrahydromethanopterin from coenzyme M and methyl-tetrahydromethanopterin. This is an energy-conserving, sodium-ion translocating step. The sequence is that of Tetrahydromethanopterin S-methyltransferase subunit F from Methanosarcina barkeri (strain Fusaro / DSM 804).